The primary structure comprises 322 residues: Methionyl-tRNA formyltransferase (322 aa).

Residue 113 to 116 coordinates (6S)-5,6,7,8-tetrahydrofolate; it reads SLLP.

Belongs to the Fmt family.

It carries out the reaction L-methionyl-tRNA(fMet) + (6R)-10-formyltetrahydrofolate = N-formyl-L-methionyl-tRNA(fMet) + (6S)-5,6,7,8-tetrahydrofolate + H(+). Functionally, attaches a formyl group to the free amino group of methionyl-tRNA(fMet). The formyl group appears to play a dual role in the initiator identity of N-formylmethionyl-tRNA by promoting its recognition by IF2 and preventing the misappropriation of this tRNA by the elongation apparatus. This chain is Methionyl-tRNA formyltransferase, found in Blochmanniella pennsylvanica (strain BPEN).